We begin with the raw amino-acid sequence, 231 residues long: Large ribosomal subunit protein uL1 (231 aa).

This sequence belongs to the universal ribosomal protein uL1 family. In terms of assembly, part of the 50S ribosomal subunit.

Its function is as follows. Binds directly to 23S rRNA. The L1 stalk is quite mobile in the ribosome, and is involved in E site tRNA release. Functionally, protein L1 is also a translational repressor protein, it controls the translation of the L11 operon by binding to its mRNA. This chain is Large ribosomal subunit protein uL1, found in Neisseria gonorrhoeae (strain ATCC 700825 / FA 1090).